The sequence spans 436 residues: FAD-dependent monooxygenase pigN (436 aa).

Residues glutamate 40, glycine 53, and arginine 118 each coordinate FAD. The active site involves arginine 200. Residues aspartate 316 and alanine 329 each coordinate FAD.

Belongs to the paxM FAD-dependent monooxygenase family. FAD is required as a cofactor.

It functions in the pathway secondary metabolite biosynthesis. In terms of biological role, FAD-dependent monooxygenase; part of the gene cluster that mediates the biosynthesis of azaphilone pigments (MonAzPs), a complex mixture of compounds with a common azaphilone skeleton very widely used as food colorants. Within the pathway, pigN hydroxylates the benzaldehyde M7PKS-1 intermediate at C-4 to form the pyran ring. The first step of the pathway is performed by the nrPKS pigA that forms the hexaketide precursor from successive condensations of five malonyl-CoA units, with a simple acetyl-CoA starter unit. The role of esterase pigG is not clear, but it may play at most a supplementary role in the formation of the benzaldehyde produced by the pigA nrPKS. This very reactive benzaldehyde is intercepted by the pigC ketoreductase that to provide the first stable enzyme-free MonAzPs intermediate, 6-(4-hydroxy-2-oxopentyl)-3-methyl-2,4-dioxocyclohexane carbaldehyde, also known as M7PKS-1. The FAD-dependent monooxygenase pigN hydroxylates M7PKS-1 at C-4, which triggers the formation of the pyran ring. PigJ, pigK and pigD are involved in the acetylation of the pyran ring. PigJ and pigK form the two subunits of a dedicated fungal FAS that produces the side chain fatty acyl moiety of MonAzPs and pigD transfers the fatty acyl chain to the C-4 alcohol. PigM and pigO are involved in the elimination of the omega-1 alcohol. PigM acts as an O-acetyltransferase that synthesizes the putative O-11 acetyl intermediate whereas pigO eliminates acetic acid to yield an intermediate with a C10(11) double bond. The dehydration of the C-11 alcohol followed by the reduction of the C6(7) double bond by the NAD(P)H-dependent oxidoreductase pigE increases the electrophilicity of the C-5 ketone of the resulting acyl benzopyran. This in turn sets up the C-5 ketone for an intramolecular Knoevenagel aldol condensation with the C-20 enol of the side chain. This condensation affords the characteristic linear tricyclic carbon skeletons of the yellow pigments that serve as the common precursors for the classical yellow pigments monascin and ankaflavin, orange pigments rubopunctatin and monascorubrin, and red pigments ribropunctamine and monascorubramine. The FAD-dependent oxidoreductase pigF is especially invoved in the biosynthesis of orange and red pigments via desaturation of C6(7). This Monascus ruber (Mold) protein is FAD-dependent monooxygenase pigN.